The following is a 1013-amino-acid chain: GTPase-activating protein BEM3 (1013 aa).

4 disordered regions span residues 90 to 197, 258 to 277, 282 to 301, and 307 to 421; these read TVVE…GSPA, GSRYDTERAGGPGPLSPESI, SDLQEHQPSDLSSTTRTDLG, and VDTT…HQSK. A compositionally biased stretch (polar residues) spans 143-160; that stretch reads QEATSGAQQVPLLTSSKS. Polar residues-rich tracts occupy residues 309-319, 333-388, and 404-418; these read TTFNAEDNPTG, TLQN…TSSN, and KSYSQHSGSPHSNSH. The PH domain occupies 555–662; that stretch reads EFAKEGMLLV…WISVLTTLCD (108 aa). Positions 702-726 are disordered; it reads AMDATSPTRPNDPNPVSLTSEEEKE. Polar residues predominate over residues 706–720; sequence TSPTRPNDPNPVSLT. Residues 799 to 1013 enclose the Rho-GAP domain; it reads LQLSSHPYQG…PPVNIHIPQI (215 aa).

The protein resides in the cytoplasm. Functionally, GTPase-activating protein (GAP) for CDC42 and less efficiently for RHO1. Negative regulator of the pheromone-response pathway through the STE20 protein kinase. This chain is GTPase-activating protein BEM3 (BEM3), found in Eremothecium gossypii (strain ATCC 10895 / CBS 109.51 / FGSC 9923 / NRRL Y-1056) (Yeast).